The primary structure comprises 638 residues: MGKIIGIDLGTTNSCVAVMQGTQPTVIENSEGYRTTPSMVAFTKTGERLIGQAAKRQAVTNPKNTIFSIKRFMGRKYDEVPNEKKFASYDVVNEGGDARVKIGEKSYSPQEISAMILQKMKQTAEDFLGEKVTEAVITVPAYFNDAQRQATKDAGKIAGLEVKRIINEPTAAALAYGLDKKKENEKVAVFDLGGGTFDISILELGDGVFEVKSTDGDTHLGGDDFDQVIIDYLADEFKKQEGIDLRKDAIALQRLKEAAEKAKIELSSRTDTEINLPFITATQEGPKHLVINLTRAKFEAMSATLFDKVLEPCRRALKNSKLDMKEIDEVVLVGGSSRIPKVQALVKEFFGKEPNKSVNPDEVVAIGAAIQGGVLQGDVTDVLLLDVTPLSLGIETLGGVMTKLIEANSTIPTRKQETFSTAADNQTSVEVHVLQGERPMASDNKTLGRFHLGDIPPAPRGIPQIEVTFDIDANGILNVSAKDKATGKEQSIKIEASGKLTEAEIEKMKEDAKAHADEDQKRKEEIDLKNSADSLIFSTEKQLSELGDKLPADKKAEIESALEKLKEAHKAGSADAIKPAMDELSKVWSEAASNLYQQPGAEAGAAPQPETNGQQESKGGDGAVNAEYEVIDGDDDKK.

Thr196 carries the post-translational modification Phosphothreonine; by autocatalysis. The interval 592–638 (ASNLYQQPGAEAGAAPQPETNGQQESKGGDGAVNAEYEVIDGDDDKK) is disordered. Positions 597–610 (QQPGAEAGAAPQPE) are enriched in low complexity. Acidic residues predominate over residues 629–638 (EVIDGDDDKK).

Belongs to the heat shock protein 70 family.

Functionally, acts as a chaperone. In Chlorobaculum parvum (strain DSM 263 / NCIMB 8327) (Chlorobium vibrioforme subsp. thiosulfatophilum), this protein is Chaperone protein DnaK.